A 195-amino-acid polypeptide reads, in one-letter code: Putative manganese efflux pump MntP (195 aa).

6 helical membrane passes run 4 to 24 (ILIT…SLAM), 39 to 59 (FVLT…NLGL), 64 to 84 (FLGV…GWQM), 120 to 140 (ILLL…TLGT), 145 to 165 (ILIT…VGFA), and 175 to 195 (GSYA…KFVV).

The protein belongs to the MntP (TC 9.B.29) family.

It is found in the cell membrane. In terms of biological role, probably functions as a manganese efflux pump. In Syntrophomonas wolfei subsp. wolfei (strain DSM 2245B / Goettingen), this protein is Putative manganese efflux pump MntP.